We begin with the raw amino-acid sequence, 148 residues long: Lysozyme-like protein 6 (148 aa).

An N-terminal signal peptide occupies residues 1-19 (MTKALLIYLVSSFLALNQA). A C-type lysozyme domain is found at 20 to 148 (SLISRCDLAQ…FYWLTGCRLR (129 aa)). 4 disulfides stabilise this stretch: Cys-25–Cys-145, Cys-49–Cys-133, Cys-83–Cys-98, and Cys-94–Cys-112. Active-site residues include Glu-54 and Asp-71.

The protein belongs to the glycosyl hydrolase 22 family. Monomer. Expressed in testis, epididymis and spermatozoa (at protein level). Expressed in late-stage spermatocytes and round spermatids.

Its subcellular location is the secreted. It localises to the cell surface. The protein resides in the cell projection. The protein localises to the cilium. It is found in the flagellum. The catalysed reaction is Hydrolysis of (1-&gt;4)-beta-linkages between N-acetylmuramic acid and N-acetyl-D-glucosamine residues in a peptidoglycan and between N-acetyl-D-glucosamine residues in chitodextrins.. In terms of biological role, may be involved sperm-egg plasma membrane adhesion and fusion during fertilization. Exhibits bacteriolytic activity in vitro against Micrococcus luteus and Staphylococcus aureus. Shows weak bacteriolytic activity against Gram-positive bacteria at physiological pH. Bacteriolytic activity is pH-dependent, with a maximum at around pH 5.6. This chain is Lysozyme-like protein 6 (LYZL6), found in Homo sapiens (Human).